Reading from the N-terminus, the 96-residue chain is Mapk-regulated corepressor-interacting protein 1 (96 aa).

Disordered regions lie at residues 1–28 (MASSPVSRVVYNGKRSGGPRSPGAGSEI) and 76–96 (AFKPVDLSDLKRRNTQDAKKS). Positions 79 to 83 (PVDLS) match the PXDLS motif motif. Residues 81–96 (DLSDLKRRNTQDAKKS) are compositionally biased toward basic and acidic residues.

The protein belongs to the MCRIP family.

It localises to the nucleus. It is found in the cytoplasm. Its subcellular location is the stress granule. May play a role in the regulation of the epithelial-mesenchymal transition. This is Mapk-regulated corepressor-interacting protein 1 (MCRIP1) from Gallus gallus (Chicken).